The sequence spans 88 residues: MKAGIHPDYHPVVFEDSSTGKRFLTRSTATSERTVEWTDGNTYPLLVVDVTADSHPFWTGAQRLLDTQGRVEKFNRKYGRRVRGGQEG.

This sequence belongs to the bacterial ribosomal protein bL31 family. Type B subfamily. In terms of assembly, part of the 50S ribosomal subunit.

The polypeptide is Large ribosomal subunit protein bL31B (Nocardia farcinica (strain IFM 10152)).